The sequence spans 88 residues: FXYD domain-containing ion transport regulator 4 (88 aa).

An N-terminal signal peptide occupies residues 1-20; it reads MEEITCAFLLLLAGLPALEA. Residues 21 to 38 lie on the Extracellular side of the membrane; it reads SDPVDKDSPFYYDWESLQ. The helical transmembrane segment at 39–59 threads the bilayer; that stretch reads LGGLIFGGLLCIAGIAMALSG. Over 60-88 the chain is Cytoplasmic; the sequence is KCKCRRTHKPSSLPGKATPLIIPGSANTC.

It belongs to the FXYD family. Regulatory subunit of the sodium/potassium-transporting ATPase which is composed of a catalytic alpha subunit, a non-catalytic beta subunit and a regulatory subunit. The regulatory subunit, a member of the FXYD protein family, modulates the enzymatic activity in a tissue- and isoform-specific way by changing affinities of the Na+/K+-ATPase toward Na(+), K(+) or ATP.

It localises to the cell membrane. It is found in the basolateral cell membrane. In terms of biological role, associates with and regulates the activity of the sodium/potassium-transporting ATPase (NKA) which catalyzes the hydrolysis of ATP coupled with the exchange of Na(+) and K(+) ions across the plasma membrane. Increases the apparent affinity of the transporter for Na(+) and increases NKA activity. The protein is FXYD domain-containing ion transport regulator 4 (Fxyd4) of Mus musculus (Mouse).